The following is a 222-amino-acid chain: MARGKVQLRRIENPVHRQVTFCKRRAGLLKKARELSILCEADIGIIIFSAHGKLYDLATTGTMEELIERYKSASGEQANACGDQRMDPKQEAMVLKQEINLLQKGLRYIYGNRANEHMTVEELNALERYLEIWMYNIRSAKMQIMIQEIQALKSKEGMLKAANEILQEKIVEQNGLIDVGMMVADQQNGHFSTVPLLEEITNPLTILSGYSTCRGSEMGYSF.

Residues 1 to 61 enclose the MADS-box domain; sequence MARGKVQLRR…GKLYDLATTG (61 aa). One can recognise a K-box domain in the interval 85 to 176; that stretch reads RMDPKQEAMV…QEKIVEQNGL (92 aa).

The protein localises to the nucleus. Functionally, probable transcription factor. This Oryza sativa subsp. indica (Rice) protein is MADS-box transcription factor 26 (MADS26).